Reading from the N-terminus, the 280-residue chain is Fe-S cluster assembly protein DRE2 (280 aa).

The interval 1-121 (MSNLLVFDNS…TTLLKKSGGG (121 aa)) is N-terminal SAM-like domain. The tract at residues 122–176 (PKKFAFKRASPATAAPSTNGTNPAATVNLNSVVTLSMDDDDLMDEDDLMEDDTNL) is linker. [2Fe-2S] cluster-binding residues include cysteine 186, cysteine 198, cysteine 201, and cysteine 203. A fe-S binding site A region spans residues 186–203 (CDPGPGKKRRKACKDCTC). [4Fe-4S] cluster-binding residues include cysteine 244, cysteine 247, cysteine 255, and cysteine 258. Short sequence motifs (cx2C motif) lie at residues 244–247 (CGSC) and 255–258 (CDGC). A fe-S binding site B region spans residues 244 to 258 (CGSCALGDAFRCDGC).

This sequence belongs to the anamorsin family. As to quaternary structure, monomer. Interacts with TAH18. Interacts with MIA40. [2Fe-2S] cluster is required as a cofactor. Requires [4Fe-4S] cluster as cofactor.

Its subcellular location is the cytoplasm. The protein resides in the mitochondrion intermembrane space. In terms of biological role, component of the cytosolic iron-sulfur (Fe-S) protein assembly (CIA) machinery required for the maturation of extramitochondrial Fe-S proteins. Part of an electron transfer chain functioning in an early step of cytosolic Fe-S biogenesis, facilitating the de novo assembly of a [4Fe-4S] cluster on the scaffold complex CFD1-NBP35. Electrons are transferred to DRE2 from NADPH via the FAD- and FMN-containing protein TAH18. TAH18-DRE2 are also required for the assembly of the diferric tyrosyl radical cofactor of ribonucleotide reductase (RNR), probably by providing electrons for reduction during radical cofactor maturation in the catalytic small subunit RNR2. The protein is Fe-S cluster assembly protein DRE2 of Yarrowia lipolytica (strain CLIB 122 / E 150) (Yeast).